The sequence spans 314 residues: Putative peptide transport system permease protein BRA1092/BS1330_II1084 (314 aa).

A run of 6 helical transmembrane segments spans residues Ala12 to Gly32, Leu101 to Ala121, Leu135 to Phe155, Trp177 to Ala197, Val237 to Ile257, and Met286 to Ile306. Residues Leu95–Tyr304 enclose the ABC transmembrane type-1 domain.

The protein belongs to the binding-protein-dependent transport system permease family. In terms of assembly, the complex is composed of two ATP-binding proteins (BRA1094), two transmembrane proteins (BRA1092 and BRA1093) and a solute-binding protein (BRA1090).

The protein resides in the cell inner membrane. Functionally, probably part of an ABC transporter complex that could be involved in peptide import. Probably responsible for the translocation of the substrate across the membrane. The polypeptide is Putative peptide transport system permease protein BRA1092/BS1330_II1084 (Brucella suis biovar 1 (strain 1330)).